A 717-amino-acid chain; its full sequence is DNA ligase (717 aa).

Residues Asp41–Asp45, Ser90–Leu91, and Glu124 contribute to the NAD(+) site. Lys126 functions as the N6-AMP-lysine intermediate in the catalytic mechanism. NAD(+) is bound by residues Arg147, Glu183, Lys299, and Lys323. Residues Cys428, Cys431, Cys446, and Cys452 each contribute to the Zn(2+) site. Residues Ala636 to Ile717 enclose the BRCT domain.

It belongs to the NAD-dependent DNA ligase family. LigA subfamily. The cofactor is Mg(2+). Mn(2+) is required as a cofactor.

It catalyses the reaction NAD(+) + (deoxyribonucleotide)n-3'-hydroxyl + 5'-phospho-(deoxyribonucleotide)m = (deoxyribonucleotide)n+m + AMP + beta-nicotinamide D-nucleotide.. DNA ligase that catalyzes the formation of phosphodiester linkages between 5'-phosphoryl and 3'-hydroxyl groups in double-stranded DNA using NAD as a coenzyme and as the energy source for the reaction. It is essential for DNA replication and repair of damaged DNA. The sequence is that of DNA ligase from Bartonella bacilliformis (strain ATCC 35685 / KC583 / Herrer 020/F12,63).